The following is a 198-amino-acid chain: MVKCKLFFWLISWFLKVKNVEKVWKFLKSCPENCYSDPQFAFIGRSNVGKSTLINALANKKIAKTSTKPGRTQLLNFYKNESEKLFVDLPGYGYAAVSKTKKHQIDRIIAGYFQKDQPISAVFLILDARVGFTNLDYIMIEYIIQQGFKLHILANKIDKTNQSTRAILLNQCKKLKLNCLLISAKNKNNLSKLQELLE.

The EngB-type G domain maps to 36–198 (SDPQFAFIGR…NLSKLQELLE (163 aa)). GTP-binding positions include 44–51 (GRSNVGKS), 70–74 (GRTQL), 88–91 (DLPG), 155–158 (NKID), and 182–184 (ISA). Mg(2+) is bound by residues S51 and T72.

It belongs to the TRAFAC class TrmE-Era-EngA-EngB-Septin-like GTPase superfamily. EngB GTPase family. Mg(2+) is required as a cofactor.

Necessary for normal cell division and for the maintenance of normal septation. This is Probable GTP-binding protein EngB from Mesomycoplasma hyopneumoniae (strain 7448) (Mycoplasma hyopneumoniae).